The following is a 354-amino-acid chain: Myosin-binding protein H-like (354 aa).

The tract at residues 1 to 47 (MEAATAPEVAAGSKLKVKEASPADAEPPQASPGQGAGSPTPQLLPPI) is disordered. At Ser-38 the chain carries Phosphoserine. Residues 45-139 (PPIEEHPKIW…GGLEATATID (95 aa)) form the Ig-like C2-type 1 domain. A Fibronectin type-III domain is found at 148–238 (PPQSIKLVDV…ETAPITTDLA (91 aa)). One can recognise an Ig-like C2-type 2 domain in the interval 261-345 (PKFTQPLADC…VNPLGEASVD (85 aa)). A disulfide bridge connects residues Cys-282 and Cys-333. Arg-321 bears the Omega-N-methylarginine mark.

It belongs to the immunoglobulin superfamily. MyBP family. In terms of tissue distribution, expressed in heart, with higher expression in the atria. As to expression, expressed in left atrium and ventricle, arteria mammaria interna and skeletal muscle. Expressed specifically en the left atrium.

It is found in the cytoplasm. The protein resides in the myofibril. Its subcellular location is the sarcomere. In terms of biological role, myosin-binding protein which plays a role in cardiac function. Seems to regulate conduction in the atria and ventricular conduction systems. This is Myosin-binding protein H-like from Homo sapiens (Human).